We begin with the raw amino-acid sequence, 468 residues long: Zinc finger protein 672 (468 aa).

4 consecutive C2H2-type zinc fingers follow at residues 15-37, 43-65, 71-93, and 100-123; these read YSCS…ERAH, FRCL…RWTH, YICS…LGTH, and CPCR…VRQH. Residues 129 to 151 form a C2H2-type 5; degenerate zinc finger; it reads HRCPLCARSFRQSALPFHLARAH. C2H2-type zinc fingers lie at residues 167–189, 202–224, 230–252, 258–280, 286–308, 314–336, 342–364, 370–392, and 398–420; these read YHCT…SRIH, HRCG…LQRH, FKCP…QRTH, YACN…QRSH, HICA…QRSH, FPCP…LRTH, YHCE…LRNH, HKCP…RKTH, and AECT…QRSH.

It belongs to the krueppel C2H2-type zinc-finger protein family.

The protein localises to the nucleus. In terms of biological role, may be involved in transcriptional regulation. This Rattus norvegicus (Rat) protein is Zinc finger protein 672 (Znf672).